A 301-amino-acid polypeptide reads, in one-letter code: MKRVAVLLGGISEEREVSLASGRQVAAALRKAGYDVFEIEVGADLGAVIAALTPAPDAVFNALHGRFGEDGTIQGVLDYMGIPYTHSGVRASSMAMDKGAAKAVFAAAGLPLAQHRIVPLDELAEADPLPRPYVIKPVNEGSSVGVFILREGDNRRADIARAWRHGSVAMTEEYVPGRELTVSVLEDRALAVTEIRAEGFYDYTAKYAAGASRHEIPADVPPSVSARARDVAVAAHRALGCRGATRSDFRYDDETDRLVLLEVNTQPGMTPTSLLPEQAAHCGIDFPALCAWMVENAACRV.

Residues 102-295 enclose the ATP-grasp domain; sequence KAVFAAAGLP…FPALCAWMVE (194 aa). Residue 128 to 181 coordinates ATP; the sequence is PLPRPYVIKPVNEGSSVGVFILREGDNRRADIARAWRHGSVAMTEEYVPGRELT. 3 residues coordinate Mg(2+): Asp248, Glu262, and Asn264.

It belongs to the D-alanine--D-alanine ligase family. Requires Mg(2+) as cofactor. Mn(2+) is required as a cofactor.

Its subcellular location is the cytoplasm. It carries out the reaction 2 D-alanine + ATP = D-alanyl-D-alanine + ADP + phosphate + H(+). It functions in the pathway cell wall biogenesis; peptidoglycan biosynthesis. In terms of biological role, cell wall formation. The sequence is that of D-alanine--D-alanine ligase from Acidiphilium cryptum (strain JF-5).